A 501-amino-acid chain; its full sequence is Phytoene desaturase (lycopene-forming) (501 aa).

Residue 12-45 (IVIGAGFGGLALAIRLQSAGIATTLVEARDKPGG) participates in FAD binding.

The protein belongs to the carotenoid/retinoid oxidoreductase family. FAD is required as a cofactor.

The catalysed reaction is 15-cis-phytoene + 4 A = all-trans-lycopene + 4 AH2. It functions in the pathway carotenoid biosynthesis; astaxanthin biosynthesis. In terms of biological role, this enzyme converts phytoene into lycopene via the intermediaries of phytofluene, zeta-carotene and neurosporene by the introduction of four double bonds. The polypeptide is Phytoene desaturase (lycopene-forming) (crtI) (Paracoccus sp. (strain N81106 / MBIC 01143) (Agrobacterium aurantiacum)).